Reading from the N-terminus, the 267-residue chain is Putative carboxymethylenebutenolidase (267 aa).

Residues Cys137, Asp194, and His226 contribute to the active site.

This sequence belongs to the dienelactone hydrolase family.

It catalyses the reaction 2-(5-oxo-2,5-dihydrofuran-2-ylidene)acetate + H2O = 4-oxohex-2-enedioate + H(+). The chain is Putative carboxymethylenebutenolidase from Yersinia pestis.